The sequence spans 137 residues: NADPH-dependent 7-cyano-7-deazaguanine reductase (137 aa).

The active-site Thioimide intermediate is Cys-50. Asp-57 functions as the Proton donor in the catalytic mechanism. Substrate-binding positions include 72 to 74 and 91 to 92; these read VEL and HE.

The protein belongs to the GTP cyclohydrolase I family. QueF type 1 subfamily.

Its subcellular location is the cytoplasm. It catalyses the reaction 7-aminomethyl-7-carbaguanine + 2 NADP(+) = 7-cyano-7-deazaguanine + 2 NADPH + 3 H(+). It participates in tRNA modification; tRNA-queuosine biosynthesis. Its function is as follows. Catalyzes the NADPH-dependent reduction of 7-cyano-7-deazaguanine (preQ0) to 7-aminomethyl-7-deazaguanine (preQ1). The chain is NADPH-dependent 7-cyano-7-deazaguanine reductase from Synechocystis sp. (strain ATCC 27184 / PCC 6803 / Kazusa).